The following is a 371-amino-acid chain: Outer membrane protein P2 (371 aa).

The first 20 residues, 1 to 20, serve as a signal peptide directing secretion; that stretch reads MKKTLAALIVGAFAASAANA.

This sequence belongs to the Gram-negative porin family. In terms of assembly, homotrimer.

It is found in the cell outer membrane. Functionally, forms pores that allow passive diffusion of small molecules across the outer membrane. In Haemophilus influenzae, this protein is Outer membrane protein P2 (ompP2).